The following is a 147-amino-acid chain: Hemoglobin subunit beta (147 aa).

Val2 is modified (N-acetylvaline). Residues 3–147 (HLADDEKAAV…VSTALAHKYH (145 aa)) enclose the Globin domain. Ser45 bears the Phosphoserine mark. The residue at position 60 (Lys60) is an N6-acetyllysine. Position 64 (His64) interacts with heme b. At Lys83 the chain carries N6-acetyllysine. His93 is a binding site for heme b. Position 94 is an S-nitrosocysteine (Cys94). Lys145 is subject to N6-acetyllysine.

It belongs to the globin family. As to quaternary structure, heterotetramer of two alpha chains and two beta chains. In terms of tissue distribution, red blood cells.

Its function is as follows. Involved in oxygen transport from the lung to the various peripheral tissues. This chain is Hemoglobin subunit beta (HBB), found in Bradypus tridactylus (Pale-throated three-toed sloth).